Reading from the N-terminus, the 503-residue chain is MILEMLNPMHYNLTSMVPEVMPVATLPILLLTGFLFFVWNHEETSSIPGPGYCMGIGPLISHLRFLWMGLGSACNYYNKMYGEFVRVWISGEETLVISKSSSTFHIMKHDHYSSRFGSTFGLQYMGMHENGVIFNNNPAVWKALRPFFVKALSGPSLARMVTVCVESVNNHLDRLDEVTNALGHVNVLTLMRRTMLDASNTLFLRIPLDEKNIVLKIQGYFDAWQALLIKPNIFFKISWLSRKHQKSIKELRDAVGILAEEKRHRIFTAEKLEDHVDFATDLILAEKRGELTKENVNQCILEMMIAAPDTLSVTVFFMLCLIAQHPKVEEALMKEIQTVLGERDLKNDDMQKLKVMENFINESMRYQPVVDIVMRKALEDDVIDGYPVKKGTNIILNIGRMHKLEFFPKPNEFTLENFEKNVPYRYFQPFGFGPRSCAGKFIAMVMMKVMLVSLLRRFHVKTLQGNCLENMQKTNDLALHPDESRSLPAMIFTPRNSEKCLEH.

The next 2 helical transmembrane spans lie at 19–39 (EVMP…FFVW) and 51–71 (GYCM…MGLG). The segment at 294–324 (ENVNQCILEMMIAAPDTLSVTVFFMLCLIAQ) is substrate-binding pocket. Residues Asp-309 and Met-374 each coordinate substrate. Residue Cys-437 participates in heme binding.

Belongs to the cytochrome P450 family. The cofactor is heme. Expressed in placenta. Highly expressed in follicles (0 hour:hCG), followed by a drop (12-24 hour:hCG) and by an increase (30-39 hour:hCG). Highly expressed in corpora lutea. Also expressed in granulosa cell layer. Not expressed in theca interna.

It is found in the endoplasmic reticulum membrane. The protein localises to the microsome membrane. The catalysed reaction is testosterone + 3 reduced [NADPH--hemoprotein reductase] + 3 O2 = 17beta-estradiol + formate + 3 oxidized [NADPH--hemoprotein reductase] + 4 H2O + 4 H(+). It carries out the reaction androst-4-ene-3,17-dione + 3 reduced [NADPH--hemoprotein reductase] + 3 O2 = estrone + formate + 3 oxidized [NADPH--hemoprotein reductase] + 4 H2O + 4 H(+). It catalyses the reaction androst-4-ene-3,17-dione + reduced [NADPH--hemoprotein reductase] + O2 = 19-hydroxyandrost-4-ene-3,17-dione + oxidized [NADPH--hemoprotein reductase] + H2O + H(+). The enzyme catalyses 19-hydroxyandrost-4-ene-3,17-dione + reduced [NADPH--hemoprotein reductase] + O2 = 19-oxo-androst-4-ene-3,17-dione + oxidized [NADPH--hemoprotein reductase] + 2 H2O + H(+). The catalysed reaction is 19-oxo-androst-4-ene-3,17-dione + reduced [NADPH--hemoprotein reductase] + O2 = estrone + formate + oxidized [NADPH--hemoprotein reductase] + H2O + 2 H(+). It carries out the reaction estrone + reduced [NADPH--hemoprotein reductase] + O2 = 2-hydroxyestrone + oxidized [NADPH--hemoprotein reductase] + H2O + H(+). It catalyses the reaction 17beta-hydroxy-5alpha-androstan-3-one + reduced [NADPH--hemoprotein reductase] + O2 = 17beta,19-dihydroxy-3-oxo-5alpha-androstanone + oxidized [NADPH--hemoprotein reductase] + H2O + H(+). The enzyme catalyses 17beta,19-dihydroxy-3-oxo-5alpha-androstanone + reduced [NADPH--hemoprotein reductase] + O2 = 17beta-hydroxy-3,19-dioxo-5alpha-androstanone + oxidized [NADPH--hemoprotein reductase] + 2 H2O + H(+). The catalysed reaction is 17beta-hydroxy-3,19-dioxo-5alpha-androstanone + reduced [NADPH--hemoprotein reductase] + O2 = 17beta-hydroxy-3-oxo-19-nor-5alpha-androst-1-ene + formate + oxidized [NADPH--hemoprotein reductase] + H2O + 2 H(+). It functions in the pathway steroid hormone biosynthesis. Functionally, a cytochrome P450 monooxygenase that catalyzes the conversion of C19 androgens, androst-4-ene-3,17-dione (androstenedione) and testosterone to the C18 estrogens, estrone and estradiol, respectively. Catalyzes three successive oxidations of C19 androgens: two conventional oxidations at C19 yielding 19-hydroxy and 19-oxo/19-aldehyde derivatives, followed by a third oxidative aromatization step that involves C1-beta hydrogen abstraction combined with cleavage of the C10-C19 bond to yield a phenolic A ring and formic acid. Alternatively, the third oxidative reaction yields a 19-norsteroid and formic acid. Converts dihydrotestosterone to delta1,10-dehydro 19-nordihydrotestosterone and may play a role in homeostasis of this potent androgen. Also displays 2-hydroxylase activity toward estrone. Mechanistically, uses molecular oxygen inserting one oxygen atom into a substrate, and reducing the second into a water molecule, with two electrons provided by NADPH via cytochrome P450 reductase (CPR; NADPH-ferrihemoprotein reductase). In Equus caballus (Horse), this protein is Aromatase (CYP19A1).